A 321-amino-acid polypeptide reads, in one-letter code: Ribosomal RNA small subunit methyltransferase H (321 aa).

Residues 42–44 (GGH), Asp62, Phe86, Asp107, and Gln114 each bind S-adenosyl-L-methionine.

This sequence belongs to the methyltransferase superfamily. RsmH family.

It is found in the cytoplasm. The enzyme catalyses cytidine(1402) in 16S rRNA + S-adenosyl-L-methionine = N(4)-methylcytidine(1402) in 16S rRNA + S-adenosyl-L-homocysteine + H(+). Specifically methylates the N4 position of cytidine in position 1402 (C1402) of 16S rRNA. The sequence is that of Ribosomal RNA small subunit methyltransferase H from Herminiimonas arsenicoxydans.